We begin with the raw amino-acid sequence, 154 residues long: Endoribonuclease YbeY (154 aa).

The Zn(2+) site is built by H113, H117, and H123.

Belongs to the endoribonuclease YbeY family. Zn(2+) serves as cofactor.

It localises to the cytoplasm. Single strand-specific metallo-endoribonuclease involved in late-stage 70S ribosome quality control and in maturation of the 3' terminus of the 16S rRNA. The polypeptide is Endoribonuclease YbeY (Vibrio cholerae serotype O1 (strain ATCC 39541 / Classical Ogawa 395 / O395)).